Here is a 315-residue protein sequence, read N- to C-terminus: Gamma-hemolysin component C (315 aa).

Residues 1 to 29 (MLKNKILATTLSVSLLAPLANPLLENAKA) form the signal peptide.

It belongs to the aerolysin family. Toxicity requires sequential binding and synergistic association of a class S and a class F component which form heterooligomeric complexes. HlgC (class S) associates with HlgB (class F) thus forming an CB toxin.

In terms of biological role, toxin that seems to act by forming pores in the membrane of the cell. Has a hemolytic and a leucotoxic activity. The chain is Gamma-hemolysin component C (hlgC) from Staphylococcus aureus (strain Mu50 / ATCC 700699).